Consider the following 327-residue polypeptide: tRNA U34 carboxymethyltransferase (327 aa).

Carboxy-S-adenosyl-L-methionine-binding positions include Lys-91, Trp-105, Lys-110, Gly-130, 181 to 182 (IE), Met-196, Tyr-200, and Arg-315.

It belongs to the class I-like SAM-binding methyltransferase superfamily. CmoB family. Homotetramer.

It catalyses the reaction carboxy-S-adenosyl-L-methionine + 5-hydroxyuridine(34) in tRNA = 5-carboxymethoxyuridine(34) in tRNA + S-adenosyl-L-homocysteine + H(+). Its function is as follows. Catalyzes carboxymethyl transfer from carboxy-S-adenosyl-L-methionine (Cx-SAM) to 5-hydroxyuridine (ho5U) to form 5-carboxymethoxyuridine (cmo5U) at position 34 in tRNAs. The sequence is that of tRNA U34 carboxymethyltransferase from Pectobacterium atrosepticum (strain SCRI 1043 / ATCC BAA-672) (Erwinia carotovora subsp. atroseptica).